A 137-amino-acid chain; its full sequence is NADPH-dependent 7-cyano-7-deazaguanine reductase (137 aa).

The Thioimide intermediate role is filled by C50. The active-site Proton donor is D57. Substrate-binding positions include 72–74 (VEL) and 91–92 (HE).

The protein belongs to the GTP cyclohydrolase I family. QueF type 1 subfamily.

Its subcellular location is the cytoplasm. It catalyses the reaction 7-aminomethyl-7-carbaguanine + 2 NADP(+) = 7-cyano-7-deazaguanine + 2 NADPH + 3 H(+). The protein operates within tRNA modification; tRNA-queuosine biosynthesis. Its function is as follows. Catalyzes the NADPH-dependent reduction of 7-cyano-7-deazaguanine (preQ0) to 7-aminomethyl-7-deazaguanine (preQ1). The protein is NADPH-dependent 7-cyano-7-deazaguanine reductase of Synechococcus sp. (strain CC9902).